Here is a 439-residue protein sequence, read N- to C-terminus: Adenylosuccinate synthetase (439 aa).

GTP contacts are provided by residues 25–31 (GDEGKGK), 53–55 (GHT), and lysine 62. The Proton acceptor role is filled by aspartate 26. 2 residues coordinate Mg(2+): aspartate 26 and glycine 53. IMP contacts are provided by residues 26 to 29 (DEGK) and 51 to 54 (NAGH). The active-site Proton donor is the histidine 54. Positions 141, 155, 232, and 247 each coordinate IMP. Threonine 307 lines the GTP pocket. 307–313 (TTTNRPR) lines the substrate pocket. IMP is bound at residue arginine 311. Residues arginine 313, 339 to 341 (KLD), and 425 to 427 (GVG) each bind GTP.

This sequence belongs to the adenylosuccinate synthetase family. In terms of assembly, homodimer. It depends on Mg(2+) as a cofactor.

It is found in the cytoplasm. The enzyme catalyses IMP + L-aspartate + GTP = N(6)-(1,2-dicarboxyethyl)-AMP + GDP + phosphate + 2 H(+). It participates in purine metabolism; AMP biosynthesis via de novo pathway; AMP from IMP: step 1/2. Functionally, plays an important role in the salvage pathway for purine nucleotide biosynthesis. Catalyzes the first commited step in the biosynthesis of AMP from IMP. The polypeptide is Adenylosuccinate synthetase (Plasmodium chabaudi chabaudi).